The primary structure comprises 95 residues: DNA-directed RNA polymerase subunit Rpo11 (95 aa).

It belongs to the archaeal Rpo11/eukaryotic RPB11/RPC19 RNA polymerase subunit family. In terms of assembly, part of the RNA polymerase complex.

The protein resides in the cytoplasm. It carries out the reaction RNA(n) + a ribonucleoside 5'-triphosphate = RNA(n+1) + diphosphate. Its function is as follows. DNA-dependent RNA polymerase (RNAP) catalyzes the transcription of DNA into RNA using the four ribonucleoside triphosphates as substrates. The chain is DNA-directed RNA polymerase subunit Rpo11 from Pyrococcus abyssi (strain GE5 / Orsay).